The following is a 264-amino-acid chain: Splicing factor U2af 38 kDa subunit (264 aa).

The segment at 12 to 40 adopts a C3H1-type 1 zinc-finger fold; it reads EKDKVNCSFYFKIGACRHGDRCSRIHNKP. S19 carries the post-translational modification Phosphoserine. An RRM domain is found at 44–149; it reads QTVLLQNLYV…RPVYSELSPV (106 aa). The C3H1-type 2 zinc finger occupies 151 to 178; sequence DFREACCRQYEMGECTRSGFCNFMHLKP. Residues 190-219 are compositionally biased toward basic residues; it reads RRRRARSRSRSPGRRRGSRSRSRSPGRRGG. Residues 190-264 are disordered; sequence RRRRARSRSR…GGGGGGGGRY (75 aa). Basic and acidic residues predominate over residues 233-251; the sequence is NERDNMRGNDRGNDRDRRK. Over residues 253–264 the composition is skewed to gly residues; that stretch reads GGGGGGGGGGRY.

It belongs to the splicing factor SR family. Associates with a 65 kDa protein.

It localises to the nucleus. Functionally, necessary for the splicing of pre-mRNA. Binds to the polypyrimidine tract of introns early during spliceosome assembly. This Drosophila melanogaster (Fruit fly) protein is Splicing factor U2af 38 kDa subunit (U2af38).